Consider the following 82-residue polypeptide: UPF0180 protein BALH_1248 (82 aa).

It belongs to the UPF0180 family.

The chain is UPF0180 protein BALH_1248 from Bacillus thuringiensis (strain Al Hakam).